The following is a 525-amino-acid chain: Sensory neuron membrane protein 1 (525 aa).

At 1-11 (MLLPKELKYAA) the chain is on the cytoplasmic side. The chain crosses the membrane as a helical span at residues 12–32 (IAGGVAVFGLIFGWVLFPVIL). The Extracellular segment spans residues 33–456 (KGQLKKEMAL…LKHQLFIPKR (424 aa)). N-linked (GlcNAc...) asparagine glycans are attached at residues asparagine 67, asparagine 229, and asparagine 324. Cystine bridges form between cysteine 268/cysteine 333, cysteine 297/cysteine 352, and cysteine 335/cysteine 341. N-linked (GlcNAc...) asparagine glycosylation occurs at asparagine 440. Residues 457 to 477 (VVGVLRWWMVSFGSLGADIGI) form a helical membrane-spanning segment. The Cytoplasmic segment spans residues 478–525 (VYHFRDHIMRLAVSGDTKVSKVTPEEDPEQKDISVIGPPAQEPAKINI). The interval 497–525 (SKVTPEEDPEQKDISVIGPPAQEPAKINI) is disordered.

Belongs to the CD36 family.

Its subcellular location is the cell membrane. Plays an olfactory role that is not restricted to pheromone sensitivity. The polypeptide is Sensory neuron membrane protein 1 (Mamestra brassicae (Cabbage moth)).